Consider the following 368-residue polypeptide: tRNA(Met) cytidine acetate ligase (368 aa).

ATP contacts are provided by residues 7–20 (IAEFNPFHNGHKYL), glycine 96, asparagine 152, and arginine 175.

It belongs to the TmcAL family.

It is found in the cytoplasm. The catalysed reaction is cytidine(34) in elongator tRNA(Met) + acetate + ATP = N(4)-acetylcytidine(34) in elongator tRNA(Met) + AMP + diphosphate. Catalyzes the formation of N(4)-acetylcytidine (ac(4)C) at the wobble position of elongator tRNA(Met), using acetate and ATP as substrates. First activates an acetate ion to form acetyladenylate (Ac-AMP) and then transfers the acetyl group to tRNA to form ac(4)C34. In Streptococcus pyogenes serotype M1, this protein is tRNA(Met) cytidine acetate ligase.